Consider the following 154-residue polypeptide: Endoribonuclease YbeY (154 aa).

Zn(2+)-binding residues include histidine 113, histidine 117, and histidine 123.

This sequence belongs to the endoribonuclease YbeY family. Zn(2+) serves as cofactor.

The protein localises to the cytoplasm. Functionally, single strand-specific metallo-endoribonuclease involved in late-stage 70S ribosome quality control and in maturation of the 3' terminus of the 16S rRNA. The sequence is that of Endoribonuclease YbeY from Verminephrobacter eiseniae (strain EF01-2).